We begin with the raw amino-acid sequence, 306 residues long: MNFPDLIPDLKPAMPELRGRLLANAPLAPLTWFRVGGPAQLLFTPADENDLAYFLARLPKEIPVSIVGVGSNLIVRDGGLPGAVIRLAARGFGETRVDGDVIHAGAAALDKRVAETAAAAGIGGLEFLYGIPGTIGGALRMNAGANGGEIKDVLEEATGIGRDGSLHVFRNAGMRLSYRKSGVDASVIFTSVRLRGAIAPPETIRAKMDEVQKHRETAQPIREKTGGSTFKNPPGQSAWKLIDEAGCRGLRVGGAQVSELHCNFLINTGDATAADIETLGETVRDRVKTHSGIELQWEIKRIGIAA.

Residues 34–199 (RVGGPAQLLF…TSVRLRGAIA (166 aa)) form the FAD-binding PCMH-type domain. The active site involves R179. S228 (proton donor) is an active-site residue. Residue E298 is part of the active site.

It belongs to the MurB family. FAD is required as a cofactor.

The protein localises to the cytoplasm. The enzyme catalyses UDP-N-acetyl-alpha-D-muramate + NADP(+) = UDP-N-acetyl-3-O-(1-carboxyvinyl)-alpha-D-glucosamine + NADPH + H(+). It participates in cell wall biogenesis; peptidoglycan biosynthesis. In terms of biological role, cell wall formation. The chain is UDP-N-acetylenolpyruvoylglucosamine reductase from Rhodopseudomonas palustris (strain BisA53).